The sequence spans 360 residues: Methylthioribose-1-phosphate isomerase (360 aa).

Aspartate 246 serves as the catalytic Proton donor.

Belongs to the eIF-2B alpha/beta/delta subunits family. MtnA subfamily.

The protein localises to the cytoplasm. It is found in the nucleus. It carries out the reaction 5-(methylsulfanyl)-alpha-D-ribose 1-phosphate = 5-(methylsulfanyl)-D-ribulose 1-phosphate. Its pathway is amino-acid biosynthesis; L-methionine biosynthesis via salvage pathway; L-methionine from S-methyl-5-thio-alpha-D-ribose 1-phosphate: step 1/6. Catalyzes the interconversion of methylthioribose-1-phosphate (MTR-1-P) into methylthioribulose-1-phosphate (MTRu-1-P). The polypeptide is Methylthioribose-1-phosphate isomerase (Aedes aegypti (Yellowfever mosquito)).